A 240-amino-acid polypeptide reads, in one-letter code: MIAFIVLPILAAVLQQSSGNVDFDSESPRKPEIQNEIIDLHNSLRRSVNPTASNMLKMEWYPEAAANAERWAYGCIESHSSRDSRVIEGIKCGENIYMSPYPMKWTDIIHAWHGEYKDFKYGVGAVPSDAVVGHYTQIVWYKSYRIGCAAAYCPSAEYSYFYVCQYCPAGNMIGKTATPYTSGPPCGDCPSDCDNGLCTNPCRQENKFTNCDSLVRQSSCQDNYMKTNCPASCFCHNEII.

The N-terminal stretch at 1-19 (MIAFIVLPILAAVLQQSSG) is a signal peptide. Positions 39-166 (DLHNSLRRSV…EYSYFYVCQY (128 aa)) constitute an SCP domain. Disulfide bonds link C75–C153, C92–C167, C148–C164, C186–C193, C189–C198, C202–C235, C211–C229, and C220–C233. A ShKT domain is found at 202 to 235 (CRQENKFTNCDSLVRQSSCQDNYMKTNCPASCFC).

Belongs to the CRISP family. In terms of tissue distribution, expressed by the venom gland.

Its subcellular location is the secreted. Its function is as follows. Blocks contraction of smooth muscle elicited by high potassium-induced depolarization, but does not block caffeine-stimulated contraction. May target voltage-gated calcium channels on smooth muscle. The chain is Cysteine-rich venom protein from Protobothrops jerdonii (Jerdon's pitviper).